We begin with the raw amino-acid sequence, 166 residues long: CDP-archaeol synthase (166 aa).

4 consecutive transmembrane segments (helical) span residues 39 to 59 (IRGF…QMYA), 61 to 81 (ISGL…LLAI), 104 to 124 (EWFL…TLLF), and 127 to 147 (IWML…LTPL).

The protein belongs to the CDP-archaeol synthase family. Mg(2+) serves as cofactor.

Its subcellular location is the cell membrane. The enzyme catalyses 2,3-bis-O-(geranylgeranyl)-sn-glycerol 1-phosphate + CTP + H(+) = CDP-2,3-bis-O-(geranylgeranyl)-sn-glycerol + diphosphate. It participates in membrane lipid metabolism; glycerophospholipid metabolism. Its function is as follows. Catalyzes the formation of CDP-2,3-bis-(O-geranylgeranyl)-sn-glycerol (CDP-archaeol) from 2,3-bis-(O-geranylgeranyl)-sn-glycerol 1-phosphate (DGGGP) and CTP. This reaction is the third ether-bond-formation step in the biosynthesis of archaeal membrane lipids. This chain is CDP-archaeol synthase, found in Methanospirillum hungatei JF-1 (strain ATCC 27890 / DSM 864 / NBRC 100397 / JF-1).